A 124-amino-acid polypeptide reads, in one-letter code: Tax1-binding protein 3 (124 aa).

At S2 the chain carries N-acetylserine. Positions 15 to 112 (RVEIHKLRQG…EVVRLLVTRQ (98 aa)) constitute a PDZ domain. A Phosphoserine modification is found at S61.

Interacts (via its PDZ domain) with GLS2. Interacts (via its PDZ domain) with RTKN (via the C-terminal region); this interaction facilitates Rho-mediated activation of the FOS serum response element (SRE). Interacts (via PDZ domain) with ARHGEF16. Interacts (via PDZ domain) with KCNJ4 (via C-terminus). Competes with LIN7A for KCNJ4 binding. Interacts (via its PDZ domain) with CTNNB1; this interaction inhibits the transcriptional activity of CTNNB1. Interacts with ADGRB2.

The protein localises to the cytoplasm. Its subcellular location is the nucleus. It localises to the cell membrane. May regulate a number of protein-protein interactions by competing for PDZ domain binding sites. Binds CTNNB1 and may thereby act as an inhibitor of the Wnt signaling pathway. Competes with LIN7A for KCNJ4 binding, and thereby promotes KCNJ4 internalization. May play a role in the Rho signaling pathway. This Mus musculus (Mouse) protein is Tax1-binding protein 3.